We begin with the raw amino-acid sequence, 380 residues long: Alcohol dehydrogenase 2 (380 aa).

8 residues coordinate Zn(2+): Cys-48, Thr-50, His-70, Cys-100, Cys-103, Cys-106, Cys-114, and Cys-178. 2 residues coordinate an alcohol: Thr-50 and His-70. NAD(+) is bound at residue Thr-50. NAD(+)-binding positions include 203–208, Asp-227, Arg-232, Thr-273, Val-296, 296–298, Phe-323, and Arg-373; these read GLGAVG and VGV.

The protein belongs to the zinc-containing alcohol dehydrogenase family. Homodimer. Homotetramer. Zn(2+) is required as a cofactor.

The protein resides in the cytoplasm. The catalysed reaction is a primary alcohol + NAD(+) = an aldehyde + NADH + H(+). It carries out the reaction a secondary alcohol + NAD(+) = a ketone + NADH + H(+). The chain is Alcohol dehydrogenase 2 (ADH2) from Solanum lycopersicum (Tomato).